Consider the following 165-residue polypeptide: Growth arrest and DNA damage-inducible protein GADD45 alpha (165 aa).

A Phosphothreonine modification is found at Thr-2.

Belongs to the GADD45 family. As to quaternary structure, interacts with AURKA, PCNA, GADD45GIP1 and MAPK14.

The protein localises to the nucleus. In terms of biological role, might affect PCNA interaction with some CDK (cell division protein kinase) complexes; stimulates DNA excision repair in vitro and inhibits entry of cells into S phase. In T-cells, functions as a regulator of p38 MAPKs by inhibiting p88 phosphorylation and activity. This is Growth arrest and DNA damage-inducible protein GADD45 alpha (GADD45A) from Felis catus (Cat).